The following is a 274-amino-acid chain: Cytochrome b-c1 complex subunit Rieske, mitochondrial (274 aa).

Residues 79-103 are Mitochondrial matrix-facing; that stretch reads SHTDVKVPDFSEYRRPEVLDSTKSS. A helical membrane pass occupies residues 104–140; the sequence is RESSEARKGFSYLVTAVTTVGVAYAAKNAVTQFVSSM. Residues 141-274 are Mitochondrial intermembrane-facing; sequence SASADVLALA…FTSDDMVIVG (134 aa). The 86-residue stretch at 187-272 folds into the Rieske domain; sequence EAAVELSQLR…YEFTSDDMVI (86 aa). [2Fe-2S] cluster is bound by residues cysteine 217, histidine 219, cysteine 236, histidine 239, and serine 241. Cysteine 222 and cysteine 238 are joined by a disulfide.

The protein belongs to the Rieske iron-sulfur protein family. Component of the ubiquinol-cytochrome c oxidoreductase (cytochrome b-c1 complex, complex III, CIII), a multisubunit enzyme composed of 11 subunits. The complex is composed of 3 respiratory subunits cytochrome b, cytochrome c1 and Rieske protein UQCRFS1, 2 core protein subunits UQCRC1/QCR1 and UQCRC2/QCR2, and 6 low-molecular weight protein subunits UQCRH/QCR6, UQCRB/QCR7, UQCRQ/QCR8, UQCR10/QCR9, UQCR11/QCR10 and subunit 9, the cleavage product of Rieske protein UQCRFS1. The complex exists as an obligatory dimer and forms supercomplexes (SCs) in the inner mitochondrial membrane with NADH-ubiquinone oxidoreductase (complex I, CI) and cytochrome c oxidase (complex IV, CIV), resulting in different assemblies (supercomplex SCI(1)III(2)IV(1) and megacomplex MCI(2)III(2)IV(2)). Incorporation of the Rieske protein UQCRFS1 is the penultimate step in complex III assembly. Interacts with TTC19, which is involved in the clearance of UQCRFS1 fragments. In terms of assembly, component of the ubiquinol-cytochrome c oxidoreductase (cytochrome b-c1 complex, complex III, CIII). Subunit 9 corresponds to the mitochondrial targeting sequence (MTS) of Rieske protein UQCRFS1. It is retained after processing and incorporated inside complex III, where it remains bound to the complex and localizes between the 2 core subunits UQCRC1/QCR1 and UQCRC2/QCR2. Requires [2Fe-2S] cluster as cofactor. Post-translationally, proteolytic processing is necessary for the correct insertion of UQCRFS1 in the complex III dimer. Several fragments are generated during UQCRFS1 insertion, most probably due to the endogenous matrix-processing peptidase (MPP) activity of the 2 core protein subunits UQCRC1/QCR1 and UQCRC2/QCR2, which are homologous to the 2 mitochondrial-processing peptidase (MPP) subunits beta-MPP and alpha-MPP respectively. The action of the protease is also necessary for the clearance of the UQCRFS1 fragments.

It localises to the mitochondrion inner membrane. It carries out the reaction a quinol + 2 Fe(III)-[cytochrome c](out) = a quinone + 2 Fe(II)-[cytochrome c](out) + 2 H(+)(out). Its function is as follows. Component of the ubiquinol-cytochrome c oxidoreductase, a multisubunit transmembrane complex that is part of the mitochondrial electron transport chain which drives oxidative phosphorylation. The respiratory chain contains 3 multisubunit complexes succinate dehydrogenase (complex II, CII), ubiquinol-cytochrome c oxidoreductase (cytochrome b-c1 complex, complex III, CIII) and cytochrome c oxidase (complex IV, CIV), that cooperate to transfer electrons derived from NADH and succinate to molecular oxygen, creating an electrochemical gradient over the inner membrane that drives transmembrane transport and the ATP synthase. The cytochrome b-c1 complex catalyzes electron transfer from ubiquinol to cytochrome c, linking this redox reaction to translocation of protons across the mitochondrial inner membrane, with protons being carried across the membrane as hydrogens on the quinol. In the process called Q cycle, 2 protons are consumed from the matrix, 4 protons are released into the intermembrane space and 2 electrons are passed to cytochrome c. The Rieske protein is a catalytic core subunit containing a [2Fe-2S] iron-sulfur cluster. It cycles between 2 conformational states during catalysis to transfer electrons from the quinol bound in the Q(0) site in cytochrome b to cytochrome c1. Incorporation of UQCRFS1 is the penultimate step in complex III assembly. Functionally, component of the ubiquinol-cytochrome c oxidoreductase (cytochrome b-c1 complex, complex III, CIII). UQCRFS1 undergoes proteolytic processing once it is incorporated in the complex III dimer. One of the fragments, called subunit 9, corresponds to its mitochondrial targeting sequence (MTS). The proteolytic processing is necessary for the correct insertion of UQCRFS1 in the complex III dimer, but the persistence of UQCRFS1-derived fragments may prevent newly imported UQCRFS1 to be processed and assembled into complex III and is detrimental for the complex III structure and function. This chain is Cytochrome b-c1 complex subunit Rieske, mitochondrial (UQCRFS1), found in Symphalangus syndactylus (Siamang).